The chain runs to 249 residues: Vesicle-associated membrane protein-associated protein A (249 aa).

A2 carries the post-translational modification N-acetylalanine. Over 2–227 (ASASGAMAKH…ASFRDNVTSP (226 aa)) the chain is Cytoplasmic. The 118-residue stretch at 14–131 (ILVLDPPTDL…MDSKLRCVFE (118 aa)) folds into the MSP domain. Residues 50-53 (KVKT) are phosphorylated FFAT motif binding. N6-acetyllysine is present on K125. Residues 135–144 (ENDKLNDMEP) show a composition bias toward basic and acidic residues. The tract at residues 135–167 (ENDKLNDMEPSKAVPLNASKQDGPMPKPHSVSL) is disordered. S166 bears the Phosphoserine mark. The stretch at 169 to 205 (DTETRKLMEECKRLQGEMMKLSEENRHLRDEGLRLRK) forms a coiled coil. T170 bears the Phosphothreonine mark. Residues S214, S216, and S219 each carry the phosphoserine modification. A helical; Anchor for type IV membrane protein membrane pass occupies residues 228 to 248 (LPSLLVVIAAIFIGFFLGKFI).

This sequence belongs to the VAMP-associated protein (VAP) (TC 9.B.17) family. Homodimer; disulfide-linked. Heterodimer with VAPB. Interacts with VAMP1, VAMP2, STX1A, BET1, SEC22C and with the C-terminal domain of OCLN. Interacts (via MSP domain) with OSBPL1A (via FFAT motif). Interacts (via MSP domain) with ZFYVE27; may retain ZFYVE27 in the endoplasmic reticulum and regulate its function in cell projections formation. Interacts with OSBP. Interacts (via C-terminus) with RSAD2/viperin (via C-terminus). Interacts with IFITM3. Interacts with OSBPL3 (phosphorylated form). Interacts with KIF5A in a ZFYVE27-dependent manner. Interacts (via MSP domain) with STARD3 (via phosphorylated FFAT motif); this interaction recruits VAPA to the endosome. Interacts with STARD3NL (via FFAT motif). Interacts with CERT1. Interacts with PLEKHA3 and SACM1L to form a ternary complex. Interacts with VPS13A (via FFAT motif). Interacts with RB1CC1 (via phosphorylated FFAT motif), MIGA2 (via phosphorylated FFAT motif), RMDN3 (via phosphorylated FFAT motif), KCNB1 (via phosphorylated FFAT motif) and KCNB2 (via phosphorylated FFAT motif). Interacts (via MSP domain) with WDR44 (via FFAT-like motif); the interactions connect the endoplasmic reticulum (ER) with the endosomal tubule. In terms of assembly, (Microbial infection) Interacts with HCV protein NS5A and NS5B. In terms of tissue distribution, ubiquitous.

It localises to the endoplasmic reticulum membrane. Its subcellular location is the cell membrane. The protein localises to the cell junction. It is found in the tight junction. The protein resides in the nucleus membrane. Endoplasmic reticulum (ER)-anchored protein that mediates the formation of contact sites between the ER and endosomes via interaction with FFAT motif-containing proteins such as STARD3 or WDR44. STARD3-VAPA interaction enables cholesterol transfer from the ER to endosomes. Via interaction with WDR44 participates in neosynthesized protein export. In addition, recruited to the plasma membrane through OSBPL3 binding. The OSBPL3-VAPA complex stimulates RRAS signaling which in turn attenuates integrin beta-1 (ITGB1) activation at the cell surface. With OSBPL3, may regulate ER morphology. May play a role in vesicle trafficking. This chain is Vesicle-associated membrane protein-associated protein A, found in Homo sapiens (Human).